The primary structure comprises 460 residues: Cysteine--tRNA ligase (460 aa).

Residue cysteine 29 coordinates Zn(2+). Residues 31 to 41 carry the 'HIGH' region motif; sequence ATPQSSPHIGH. Zn(2+) contacts are provided by cysteine 212, histidine 237, and glutamate 241. A 'KMSKS' region motif is present at residues 268–272; that stretch reads KMSKS. Lysine 271 contributes to the ATP binding site.

It belongs to the class-I aminoacyl-tRNA synthetase family. In terms of assembly, monomer. Requires Zn(2+) as cofactor.

It localises to the cytoplasm. It carries out the reaction tRNA(Cys) + L-cysteine + ATP = L-cysteinyl-tRNA(Cys) + AMP + diphosphate. The chain is Cysteine--tRNA ligase from Corynebacterium glutamicum (strain R).